Consider the following 289-residue polypeptide: Phosphatidylserine decarboxylase proenzyme (289 aa).

Residues Asp-92, His-149, and Ser-254 each act as charge relay system; for autoendoproteolytic cleavage activity in the active site. Residue Ser-254 is the Schiff-base intermediate with substrate; via pyruvic acid; for decarboxylase activity of the active site. Pyruvic acid (Ser); by autocatalysis is present on Ser-254.

It belongs to the phosphatidylserine decarboxylase family. PSD-B subfamily. Prokaryotic type I sub-subfamily. In terms of assembly, heterodimer of a large membrane-associated beta subunit and a small pyruvoyl-containing alpha subunit. It depends on pyruvate as a cofactor. In terms of processing, is synthesized initially as an inactive proenzyme. Formation of the active enzyme involves a self-maturation process in which the active site pyruvoyl group is generated from an internal serine residue via an autocatalytic post-translational modification. Two non-identical subunits are generated from the proenzyme in this reaction, and the pyruvate is formed at the N-terminus of the alpha chain, which is derived from the carboxyl end of the proenzyme. The autoendoproteolytic cleavage occurs by a canonical serine protease mechanism, in which the side chain hydroxyl group of the serine supplies its oxygen atom to form the C-terminus of the beta chain, while the remainder of the serine residue undergoes an oxidative deamination to produce ammonia and the pyruvoyl prosthetic group on the alpha chain. During this reaction, the Ser that is part of the protease active site of the proenzyme becomes the pyruvoyl prosthetic group, which constitutes an essential element of the active site of the mature decarboxylase.

Its subcellular location is the cell membrane. The catalysed reaction is a 1,2-diacyl-sn-glycero-3-phospho-L-serine + H(+) = a 1,2-diacyl-sn-glycero-3-phosphoethanolamine + CO2. It participates in phospholipid metabolism; phosphatidylethanolamine biosynthesis; phosphatidylethanolamine from CDP-diacylglycerol: step 2/2. Functionally, catalyzes the formation of phosphatidylethanolamine (PtdEtn) from phosphatidylserine (PtdSer). This chain is Phosphatidylserine decarboxylase proenzyme, found in Pseudomonas aeruginosa (strain LESB58).